A 466-amino-acid chain; its full sequence is MTPPRKLHIKSYGCQMNVYDAQRMVDTLGAEGFVETAEAGDADLVILNTCHIREKASEKVYSELGRLRVAKEEAARQGRAMQIAVAGCVAQAEGAEIVTRAPTVDVVVGPQSYHHLPELLARAGRGEPAIETEFPAEDKFGFLARPSREAIRARGVSAFVTVQEGCDKFCTFCVVPYTRGSEMSRPVARILDEVTRLTENGVREITLIGQNVNAYHGEAPDGSTWTLGRLLYGIAEIPGVARIRYSTSHPNDVDDSLIAAHRDLASVMPFVHLPVQSGSDRILGLMNRKHGASDYRKVVDRFRAARPDIAFSSDFIVGFPGETEEDFRATLALIAQIGYAAAYSFKYSPRPGTPAADMQEMVSATEMDERLERLQSLIDSQQAAFNKAAIGTVVDVLFERAARKPGQLVGRTAYLQPAHVMAPDNIIGQVLPVRIDSLERYSLLGELVATAAPVAGAATPLVSIGG.

The MTTase N-terminal domain occupies 5-125 (RKLHIKSYGC…LPELLARAGR (121 aa)). [4Fe-4S] cluster-binding residues include C14, C50, C88, C166, C170, and C173. The 233-residue stretch at 152–384 (RARGVSAFVT…QSLIDSQQAA (233 aa)) folds into the Radical SAM core domain. Residues 387-449 (KAAIGTVVDV…RYSLLGELVA (63 aa)) enclose the TRAM domain.

It belongs to the methylthiotransferase family. MiaB subfamily. In terms of assembly, monomer. The cofactor is [4Fe-4S] cluster.

Its subcellular location is the cytoplasm. The catalysed reaction is N(6)-dimethylallyladenosine(37) in tRNA + (sulfur carrier)-SH + AH2 + 2 S-adenosyl-L-methionine = 2-methylsulfanyl-N(6)-dimethylallyladenosine(37) in tRNA + (sulfur carrier)-H + 5'-deoxyadenosine + L-methionine + A + S-adenosyl-L-homocysteine + 2 H(+). In terms of biological role, catalyzes the methylthiolation of N6-(dimethylallyl)adenosine (i(6)A), leading to the formation of 2-methylthio-N6-(dimethylallyl)adenosine (ms(2)i(6)A) at position 37 in tRNAs that read codons beginning with uridine. The protein is tRNA-2-methylthio-N(6)-dimethylallyladenosine synthase of Bradyrhizobium sp. (strain BTAi1 / ATCC BAA-1182).